Reading from the N-terminus, the 372-residue chain is Anhydro-N-acetylmuramic acid kinase (372 aa).

Position 21–28 (21–28 (GTSMDGVD)) interacts with ATP.

This sequence belongs to the anhydro-N-acetylmuramic acid kinase family.

It catalyses the reaction 1,6-anhydro-N-acetyl-beta-muramate + ATP + H2O = N-acetyl-D-muramate 6-phosphate + ADP + H(+). Its pathway is amino-sugar metabolism; 1,6-anhydro-N-acetylmuramate degradation. The protein operates within cell wall biogenesis; peptidoglycan recycling. In terms of biological role, catalyzes the specific phosphorylation of 1,6-anhydro-N-acetylmuramic acid (anhMurNAc) with the simultaneous cleavage of the 1,6-anhydro ring, generating MurNAc-6-P. Is required for the utilization of anhMurNAc either imported from the medium or derived from its own cell wall murein, and thus plays a role in cell wall recycling. In Bordetella avium (strain 197N), this protein is Anhydro-N-acetylmuramic acid kinase.